The chain runs to 624 residues: Polygalacturonase 1 beta-like protein 2 (624 aa).

The signal sequence occupies residues 1-26 (MNNIEATLFLCFFCIFSSSNVHFAGA). An FXXY 1 repeat occupies 121–124 (FAAY). Asn128 carries N-linked (GlcNAc...) asparagine glycosylation. FXXY repeat units lie at residues 129 to 132 (FTNY), 143 to 146 (FKNY), 157 to 160 (FRRY), 171 to 174 (FTNY), 185 to 188 (FTTY), 199 to 202 (FTNY), 213 to 216 (FTSY), 227 to 230 (FTTY), 241 to 244 (FTSY), 255 to 258 (FSGY), and 269 to 272 (FTKY). An N-linked (GlcNAc...) asparagine glycan is attached at Asn145. The tract at residues 199-219 (FTNYNTDANEPNGRFTSYSDK) is disordered. Asn280 is a glycosylation site (N-linked (GlcNAc...) asparagine). 5 FXXY repeats span residues 283–286 (FTSY), 297–300 (FKGY), 311–314 (FKNY), 325–328 (FSSY), and 339–342 (FVNY). An N-linked (GlcNAc...) asparagine glycan is attached at Asn352. One copy of the FXXY 18 repeat lies at 353–356 (FTGY). The N-linked (GlcNAc...) asparagine glycan is linked to Asn364. FXXY repeat units follow at residues 367–370 (FKTY), 376–379 (FKVY), and 386–389 (FARY). 2 N-linked (GlcNAc...) asparagine glycosylation sites follow: Asn392 and Asn463. The BURP domain occupies 409-623 (FFREAMLKEG…FENDMTWNII (215 aa)).

As to expression, expressed in flowers and stems.

It localises to the secreted. The protein resides in the extracellular space. It is found in the apoplast. Its subcellular location is the cell wall. Involved in cell size determination. This chain is Polygalacturonase 1 beta-like protein 2, found in Arabidopsis thaliana (Mouse-ear cress).